Reading from the N-terminus, the 840-residue chain is 9-beta-pimara-7,15-diene synthase, chloroplastic (840 aa).

Residues 1-56 constitute a chloroplast transit peptide; sequence MASPMEAVARSSLVLAPRRRRALGLLPAAAAPFVLDCRRRHNGGMRRPHVSFACSA. The Mg(2+) site is built by D589, D593, N733, S737, and E741. The DDXXD motif motif lies at 589–593; the sequence is DDFFD.

The protein belongs to the terpene synthase family. Mg(2+) is required as a cofactor.

The protein localises to the plastid. The protein resides in the chloroplast. It carries out the reaction 9alpha-copalyl diphosphate = 9beta-pimara-7,15-diene + diphosphate. Involved in the biosynthesis of momilactone A and B phytoalexins. Catalyzes the conversion of syn-copalyl diphosphate to the phytoalexin precursor syn-pimara-7,15-diene. This chain is 9-beta-pimara-7,15-diene synthase, chloroplastic, found in Oryza sativa subsp. indica (Rice).